The sequence spans 257 residues: tRNA pseudouridine synthase A (257 aa).

The Nucleophile role is filled by D53. Residue Y111 coordinates substrate.

It belongs to the tRNA pseudouridine synthase TruA family. In terms of assembly, homodimer.

The catalysed reaction is uridine(38/39/40) in tRNA = pseudouridine(38/39/40) in tRNA. Its function is as follows. Formation of pseudouridine at positions 38, 39 and 40 in the anticodon stem and loop of transfer RNAs. This chain is tRNA pseudouridine synthase A, found in Xanthomonas euvesicatoria pv. vesicatoria (strain 85-10) (Xanthomonas campestris pv. vesicatoria).